The primary structure comprises 144 residues: C-C motif chemokine 25 (144 aa).

Residues 1–23 form the signal peptide; it reads MKLWLFACLVACFVGAWMPVVHA. Intrachain disulfides connect Cys30/Cys58 and Cys31/Cys73. The disordered stretch occupies residues 98–144; it reads KSASDSQTERKKSNHMKSKVENPNSTSVRSATLGHPRMVMMPRKTNN. Over residues 118-127 the composition is skewed to polar residues; sequence ENPNSTSVRS.

The protein belongs to the intercrine beta (chemokine CC) family. In terms of tissue distribution, specifically expressed by thymic dendritic cells. High levels in thymus and small intestine.

Its subcellular location is the secreted. Functionally, potentially involved in T-cell development. Recombinant protein shows chemotactic activity on thymocytes, macrophages, THP-1 cells, and dendritics cells but is inactive on peripheral blood lymphocytes and neutrophils. Binds to CCR9. Binds to atypical chemokine receptor ACKR4 and mediates the recruitment of beta-arrestin (ARRB1/2) to ACKR4. The protein is C-C motif chemokine 25 (Ccl25) of Mus musculus (Mouse).